Here is a 205-residue protein sequence, read N- to C-terminus: Thymidylate kinase (205 aa).

7–14 (GIDGSGKT) is a binding site for ATP.

Belongs to the thymidylate kinase family.

It catalyses the reaction dTMP + ATP = dTDP + ADP. Its function is as follows. Phosphorylation of dTMP to form dTDP in both de novo and salvage pathways of dTTP synthesis. The protein is Thymidylate kinase of Wolbachia sp. subsp. Brugia malayi (strain TRS).